Here is a 338-residue protein sequence, read N- to C-terminus: Probable tRNA pseudouridine synthase B (338 aa).

Asp80 acts as the Nucleophile in catalysis. Residues 247-322 (LPRIEIRDTA…IMVDTKRVLM (76 aa)) enclose the PUA domain.

This sequence belongs to the pseudouridine synthase TruB family. Type 2 subfamily.

It carries out the reaction uridine(55) in tRNA = pseudouridine(55) in tRNA. In terms of biological role, could be responsible for synthesis of pseudouridine from uracil-55 in the psi GC loop of transfer RNAs. This chain is Probable tRNA pseudouridine synthase B, found in Methanopyrus kandleri (strain AV19 / DSM 6324 / JCM 9639 / NBRC 100938).